The primary structure comprises 240 residues: Spore coat polysaccharide biosynthesis protein SpsF (240 aa).

This sequence belongs to the CMP-NeuNAc synthase family.

Its pathway is spore coat biogenesis; spore coat polysaccharide biosynthesis. The sequence is that of Spore coat polysaccharide biosynthesis protein SpsF (spsF) from Bacillus subtilis (strain 168).